The following is a 319-amino-acid chain: Methionyl-tRNA formyltransferase (319 aa).

116–119 (SLLP) contacts (6S)-5,6,7,8-tetrahydrofolate.

Belongs to the Fmt family.

The catalysed reaction is L-methionyl-tRNA(fMet) + (6R)-10-formyltetrahydrofolate = N-formyl-L-methionyl-tRNA(fMet) + (6S)-5,6,7,8-tetrahydrofolate + H(+). Its function is as follows. Attaches a formyl group to the free amino group of methionyl-tRNA(fMet). The formyl group appears to play a dual role in the initiator identity of N-formylmethionyl-tRNA by promoting its recognition by IF2 and preventing the misappropriation of this tRNA by the elongation apparatus. This is Methionyl-tRNA formyltransferase from Treponema pallidum (strain Nichols).